Here is a 421-residue protein sequence, read N- to C-terminus: D-amino acid dehydrogenase (421 aa).

FAD is bound at residue Val3 to Tyr17.

The protein belongs to the DadA oxidoreductase family. The cofactor is FAD.

The enzyme catalyses a D-alpha-amino acid + A + H2O = a 2-oxocarboxylate + AH2 + NH4(+). Its pathway is amino-acid degradation; D-alanine degradation; NH(3) and pyruvate from D-alanine: step 1/1. Oxidative deamination of D-amino acids. This is D-amino acid dehydrogenase from Methylobacterium sp. (strain 4-46).